Here is a 146-residue protein sequence, read N- to C-terminus: Prolactin-inducible protein homolog (146 aa).

The N-terminal stretch at 1–28 (MHLLQLLFRASPATLLLVLCLQLGANKA) is a signal peptide. Position 29 is a pyrrolidone carboxylic acid (Gln29). Intrachain disulfides connect Cys65–Cys91 and Cys89–Cys123. The N-linked (GlcNAc...) asparagine glycan is linked to Asn105.

This sequence belongs to the PIP family. As to quaternary structure, monomer. Interacts with AZGP1.

It localises to the secreted. The polypeptide is Prolactin-inducible protein homolog (PIP) (Pongo pygmaeus (Bornean orangutan)).